The chain runs to 304 residues: Aspartate carbamoyltransferase catalytic subunit (304 aa).

The carbamoyl phosphate site is built by Arg55 and Thr56. Lys83 contacts L-aspartate. 3 residues coordinate carbamoyl phosphate: Arg105, His133, and Gln136. 2 residues coordinate L-aspartate: Arg166 and Arg220. Gly261 and Pro262 together coordinate carbamoyl phosphate.

The protein belongs to the aspartate/ornithine carbamoyltransferase superfamily. ATCase family. In terms of assembly, heterododecamer (2C3:3R2) of six catalytic PyrB chains organized as two trimers (C3), and six regulatory PyrI chains organized as three dimers (R2).

It catalyses the reaction carbamoyl phosphate + L-aspartate = N-carbamoyl-L-aspartate + phosphate + H(+). Its pathway is pyrimidine metabolism; UMP biosynthesis via de novo pathway; (S)-dihydroorotate from bicarbonate: step 2/3. Functionally, catalyzes the condensation of carbamoyl phosphate and aspartate to form carbamoyl aspartate and inorganic phosphate, the committed step in the de novo pyrimidine nucleotide biosynthesis pathway. This chain is Aspartate carbamoyltransferase catalytic subunit, found in Caldanaerobacter subterraneus subsp. tengcongensis (strain DSM 15242 / JCM 11007 / NBRC 100824 / MB4) (Thermoanaerobacter tengcongensis).